Consider the following 504-residue polypeptide: Ectoine/proline transporter ProP (504 aa).

A run of 11 helical transmembrane segments spans residues 41-61 (FMEW…TAVF), 71-91 (LLAV…GGLV), 118-138 (LIGL…LLYL), 169-189 (FFGA…ASVV), 207-227 (DFGW…AVYL), 272-292 (LLIG…LTSY), 309-329 (AAVT…VGMW), 337-357 (PVYA…FLIM), 362-382 (IGAV…YVAL), 399-419 (GMGI…PLIT), and 430-450 (IVPA…LLFM). The disordered stretch occupies residues 477 to 504 (NQDEDPNIDLSHMPFPDEENVGAEKQNA).

The protein belongs to the major facilitator superfamily.

The protein localises to the cell membrane. Its activity is regulated as follows. Uptake is activated by osmotic stress. Inhibited by CCCP. Involved in the uptake of osmoprotectants. Can transport ectoine and proline. Protons are probably the coupling ions. This is Ectoine/proline transporter ProP from Corynebacterium glutamicum (strain ATCC 13032 / DSM 20300 / JCM 1318 / BCRC 11384 / CCUG 27702 / LMG 3730 / NBRC 12168 / NCIMB 10025 / NRRL B-2784 / 534).